A 271-amino-acid polypeptide reads, in one-letter code: Urease accessory protein UreD (271 aa).

This sequence belongs to the UreD family. UreD, UreF and UreG form a complex that acts as a GTP-hydrolysis-dependent molecular chaperone, activating the urease apoprotein by helping to assemble the nickel containing metallocenter of UreC. The UreE protein probably delivers the nickel.

The protein localises to the cytoplasm. Its function is as follows. Required for maturation of urease via the functional incorporation of the urease nickel metallocenter. The sequence is that of Urease accessory protein UreD from Actinomyces naeslundii.